Reading from the N-terminus, the 1038-residue chain is Importin-7 (1038 aa).

M1 is modified (N-acetylmethionine). One can recognise an Importin N-terminal domain in the interval 22–101 (AERQLNEAHK…RENIVEAIIH (80 aa)). Positions 881–910 (EHENDSDDDEDAEDDDETEELGSDEDDIDE) are disordered. The segment covering 884-910 (NDSDDDEDAEDDDETEELGSDEDDIDE) has biased composition (acidic residues). The residue at position 886 (S886) is a Phosphoserine. Phosphothreonine is present on T898. Phosphoserine occurs at positions 903 and 1020.

This sequence belongs to the importin beta family. Forms a heterodimer with KPNB1. Interacts with histone H1. Interacts with H2A, H2B, H3 and H4 histones. Interacts with SNUPN and XPO1. Interacts with RPS7 and RPL5. Interacts with RPL23A (via BIB domain). Binds directly to nuclear pore complexes. Interacts with SMAD4 and NUP93; translocates SMAD4 to the nucleus through the NPC upon BMP7 stimulation resulting in activation of SMAD4 signaling. Interacts with phosphorylated SMAD2; the interaction facilitates translocation of SMAD2 to the nucleus. Interacts with SRP19. Interacts with RUNX2; the interaction inhibits RUNX2 nuclear translocation in osteoblasts. Interacts with HDAC6, DLX3 and KLF4; the interaction facilitates HDAC6, DLX3 and KLF4 nuclear translocation in dental papilla cells.

The protein resides in the cytoplasm. Its subcellular location is the nucleus. Functionally, functions in nuclear protein import, either by acting as autonomous nuclear transport receptor or as an adapter-like protein in association with the importin-beta subunit KPNB1. Acting autonomously is thought to serve itself as receptor for nuclear localization signals (NLS) and to promote translocation of import substrates through the nuclear pore complex (NPC) by an energy requiring, Ran-dependent mechanism. At the nucleoplasmic side of the NPC, Ran binds to importin, the importin/substrate complex dissociates and importin is re-exported from the nucleus to the cytoplasm where GTP hydrolysis releases Ran. Mediates autonomously the nuclear import of ribosomal proteins RPL23A, RPS7 and RPL5. In association with KPNB1 mediates the nuclear import of H1 histone and the Ran-binding site of IPO7 is not required but synergizes with that of KPNB1 in importin/substrate complex dissociation. Promotes odontoblast differentiation via promoting nuclear translocation of DLX3, KLF4, SMAD2, thereby facilitating the transcription of target genes that play a role in odontoblast differentiation. Facilitates BMP4-induced translocation of SMAD1 to the nucleus and recruitment to the MSX1 gene promoter, thereby promotes the expression of the odontogenic regulator MSX1 in dental mesenchymal cells. Also promotes odontoblast differentiation by facilitating the nuclear translocation of HDAC6 and subsequent repression of RUNX2 expression. Inhibits osteoblast differentiation by inhibiting nuclear translocation of RUNX2 and therefore inhibition of RUNX2 target gene transcription. In vitro, mediates nuclear import of H2A, H2B, H3 and H4 histones. The protein is Importin-7 (Ipo7) of Mus musculus (Mouse).